We begin with the raw amino-acid sequence, 578 residues long: 15-cis-phytoene desaturase, chloroplastic/chromoplastic (578 aa).

Residues 1–87 (MDTGCLSSMN…PLENTINFLE (87 aa)) constitute a chloroplast and chromoplast transit peptide. FAD is bound by residues Ala-115, 134–135 (EA), Lys-142, 159–160 (HI), and Tyr-165. Arg-300 serves as a coordination point for substrate. Ile-342 and Asp-531 together coordinate FAD. Residue Ala-539 participates in substrate binding. An FAD-binding site is contributed by Met-541.

Belongs to the carotenoid/retinoid oxidoreductase family. Homotetramer. Homotetramer is the active form of the enzyme. FAD serves as cofactor.

The protein localises to the plastid. Its subcellular location is the chloroplast. It localises to the chromoplast. It is found in the membrane. It carries out the reaction 2 a plastoquinone + 15-cis-phytoene = 9,9',15-tri-cis-zeta-carotene + 2 a plastoquinol. It participates in carotenoid biosynthesis; lycopene biosynthesis. With respect to regulation, inhibited by the herbicide norflurazon (NFZ). Its function is as follows. Converts phytoene into zeta-carotene via the intermediary of phytofluene by the symmetrical introduction of two double bonds at the C-11 and C-11' positions of phytoene with a concomitant isomerization of two neighboring double bonds at the C9 and C9' positions from trans to cis. Active with decylplastoquinone (DPQ) as substrate. Also active with other benzoquinones, which are strongly preferred over naphthoquinones as substrates. The chain is 15-cis-phytoene desaturase, chloroplastic/chromoplastic (PDS1) from Oryza sativa subsp. indica (Rice).